We begin with the raw amino-acid sequence, 166 residues long: PTS system glucose-specific EIIA component (166 aa).

Positions Asp36–Asn140 constitute a PTS EIIA type-1 domain. Zn(2+) contacts are provided by His73 and His88. The active-site Tele-phosphohistidine intermediate; for EIIA activity is His88. His88 is modified (phosphohistidine; by HPr).

In terms of assembly, heterodimer with glycerol kinase (glpk). Zn(2+) serves as cofactor.

The protein localises to the cytoplasm. In terms of biological role, the phosphoenolpyruvate-dependent sugar phosphotransferase system (sugar PTS), a major carbohydrate active transport system, catalyzes the phosphorylation of incoming sugar substrates concomitantly with their translocation across the cell membrane. The enzyme II complex composed of PtsG and Crr is involved in glucose transport. The polypeptide is PTS system glucose-specific EIIA component (crr) (Haemophilus influenzae (strain ATCC 51907 / DSM 11121 / KW20 / Rd)).